The following is a 216-amino-acid chain: UPF0502 protein VCM66_A0698 (216 aa).

The protein belongs to the UPF0502 family.

This chain is UPF0502 protein VCM66_A0698, found in Vibrio cholerae serotype O1 (strain M66-2).